The chain runs to 188 residues: Probable DNA-directed RNA polymerase subunit delta (188 aa).

Residues 14-83 form the HTH HARE-type domain; that stretch reads LSMIEVARAI…GENKWGLRSW (70 aa). The interval 119-188 is disordered; that stretch reads EDAIDYSADD…EDEEDEDEEE (70 aa).

This sequence belongs to the RpoE family. As to quaternary structure, RNAP is composed of a core of 2 alpha, a beta and a beta' subunits. The core is associated with a delta subunit and one of several sigma factors.

In terms of biological role, participates in both the initiation and recycling phases of transcription. In the presence of the delta subunit, RNAP displays an increased specificity of transcription, a decreased affinity for nucleic acids, and an increased efficiency of RNA synthesis because of enhanced recycling. The chain is Probable DNA-directed RNA polymerase subunit delta from Streptococcus equi subsp. zooepidemicus (strain H70).